Here is a 682-residue protein sequence, read N- to C-terminus: Nephrocystin-1-like protein (682 aa).

Positions 10–100 (LQDAINRFPQ…ALSPEKEQLS (91 aa)) form a coiled coil. Positions 96-188 (KEQLSFSVSV…PLESKTLNER (93 aa)) are disordered. Acidic residues predominate over residues 128–148 (NDDESEDSDNDSEIIETDVQL). The SH3 domain occupies 215 to 275 (VRGNVFVAID…PKTYLQHVKE (61 aa)).

Belongs to the nephrocystin-1 family. As to expression, expressed in ciliated sensory neurons of the head (amphid neurons) and the tail in hermaphrodites (phasmid neurons) and males (sensory ray neurons).

Plays a role in the extension of dendrites from phasmid ciliated sensory neurons. May be necessary for initial assembly of the cilium. The protein is Nephrocystin-1-like protein of Caenorhabditis elegans.